A 380-amino-acid polypeptide reads, in one-letter code: Hydrogenase maturation factor HypD1 (380 aa).

Fe cation contacts are provided by cysteine 36, cysteine 64, and cysteine 67.

The protein belongs to the HypD family. The cofactor is [4Fe-4S] cluster.

It functions in the pathway protein modification; [NiFe] hydrogenase maturation. Involved in the maturation of [NiFe] hydrogenases. Involved in the biosynthesis of the Fe(CN)(2)CO cofactor. This chain is Hydrogenase maturation factor HypD1 (hypD1), found in Bradyrhizobium diazoefficiens (strain JCM 10833 / BCRC 13528 / IAM 13628 / NBRC 14792 / USDA 110).